The primary structure comprises 431 residues: Arginine biosynthesis bifunctional protein ArgJ, mitochondrial (431 aa).

The substrate site is built by Thr174, Lys200, Thr211, Glu297, Asn426, and Thr431. Catalysis depends on Thr211, which acts as the Nucleophile.

Belongs to the ArgJ family. Heterodimer of an alpha and a beta chain. In terms of processing, the alpha and beta chains are autoproteolytically processed from a single precursor protein within the mitochondrion.

The protein localises to the mitochondrion matrix. It carries out the reaction N(2)-acetyl-L-ornithine + L-glutamate = N-acetyl-L-glutamate + L-ornithine. The catalysed reaction is L-glutamate + acetyl-CoA = N-acetyl-L-glutamate + CoA + H(+). It participates in amino-acid biosynthesis; L-arginine biosynthesis; L-ornithine and N-acetyl-L-glutamate from L-glutamate and N(2)-acetyl-L-ornithine (cyclic): step 1/1. Its pathway is amino-acid biosynthesis; L-arginine biosynthesis; N(2)-acetyl-L-ornithine from L-glutamate: step 1/4. Functionally, catalyzes two activities which are involved in the cyclic version of arginine biosynthesis: the synthesis of acetylglutamate from glutamate and acetyl-CoA, and of ornithine by transacetylation between acetylornithine and glutamate. The protein is Arginine biosynthesis bifunctional protein ArgJ, mitochondrial of Yarrowia lipolytica (strain CLIB 122 / E 150) (Yeast).